The sequence spans 406 residues: NAC transcription factor NAM-B1 (406 aa).

The span at 1–11 shows a compositional bias: polar residues; that stretch reads MGSPDSSSGSA. Residues 1–40 form a disordered region; sequence MGSPDSSSGSAQKPPRHQHQHQPPPPRRQGSAPELPPGFR. The NAC domain occupies 35 to 204; the sequence is LPPGFRFHPT…DWVLCRIYKK (170 aa). A DNA-binding region spans residues 137–210; it reads VGVKKALVFY…IYKKTSKAAA (74 aa).

The protein resides in the nucleus. In terms of biological role, transcription factor of the NAC family associated with the grain protein content (GPC). Sequences of the 11 European varieties of H.vulgare tested belongs to the same haplotype while the sequence found in H.spontaneum, an ancestor of the cultivated H.vulgare which has a higher GPC, belongs to an other haplotype. This Hordeum vulgare subsp. spontaneum (Wild barley) protein is NAC transcription factor NAM-B1 (NAM-B1).